A 512-amino-acid chain; its full sequence is Maturase K (512 aa).

Belongs to the intron maturase 2 family. MatK subfamily.

The protein resides in the plastid. Its subcellular location is the chloroplast. Its function is as follows. Usually encoded in the trnK tRNA gene intron. Probably assists in splicing its own and other chloroplast group II introns. This chain is Maturase K, found in Soldanella alpina (Alpine snowbell).